Consider the following 331-residue polypeptide: ATP-dependent 6-phosphofructokinase (331 aa).

Gly-12 is an ATP binding site. ADP-binding positions include 22–26 and 55–60; these read RGVVR and RYSVSD. Residues 73–74 and 103–106 contribute to the ATP site; these read RF and GDGS. Asp-104 is a Mg(2+) binding site. A substrate-binding site is contributed by 127-129; that stretch reads TID. The Proton acceptor role is filled by Asp-129. Position 156 (Arg-156) interacts with ADP. Substrate contacts are provided by residues Arg-164 and 171 to 173; that span reads MGR. Residues 187-189, Lys-213, and 215-217 contribute to the ADP site; these read GCE and KKH. Residues Glu-224, Arg-245, and 251–254 contribute to the substrate site; that span reads HIQR.

The protein belongs to the phosphofructokinase type A (PFKA) family. ATP-dependent PFK group I subfamily. Prokaryotic clade 'B1' sub-subfamily. In terms of assembly, homotetramer. The cofactor is Mg(2+).

Its subcellular location is the cytoplasm. It carries out the reaction beta-D-fructose 6-phosphate + ATP = beta-D-fructose 1,6-bisphosphate + ADP + H(+). The protein operates within carbohydrate degradation; glycolysis; D-glyceraldehyde 3-phosphate and glycerone phosphate from D-glucose: step 3/4. Allosterically activated by ADP and other diphosphonucleosides, and allosterically inhibited by phosphoenolpyruvate. Catalyzes the phosphorylation of D-fructose 6-phosphate to fructose 1,6-bisphosphate by ATP, the first committing step of glycolysis. This chain is ATP-dependent 6-phosphofructokinase, found in Yersinia enterocolitica serotype O:8 / biotype 1B (strain NCTC 13174 / 8081).